The following is a 114-amino-acid chain: uncharacterized protein (114 aa).

Functionally, possibly involved in pGI2 replication mechanism. This is an uncharacterized protein from Bacillus thuringiensis.